The primary structure comprises 93 residues: Protein translocase subunit SecE (93 aa).

The tract at residues 1 to 33 is disordered; the sequence is MTDALGSIDMPDAEDETREKKARKGGKRGKKGP. Over residues 20 to 33 the composition is skewed to basic residues; it reads KKARKGGKRGKKGP. The chain crosses the membrane as a helical span at residues 64–84; it reads TVVIVFVVIMIGLVTVIDFGF.

The protein belongs to the SecE/SEC61-gamma family. Component of the Sec protein translocase complex. Heterotrimer consisting of SecY, SecE and SecG subunits. The heterotrimers can form oligomers, although 1 heterotrimer is thought to be able to translocate proteins. Interacts with the ribosome. Interacts with SecDF, and other proteins may be involved. Interacts with SecA.

It is found in the cell membrane. In terms of biological role, essential subunit of the Sec protein translocation channel SecYEG. Clamps together the 2 halves of SecY. May contact the channel plug during translocation. This Streptomyces virginiae (Streptomyces cinnamonensis) protein is Protein translocase subunit SecE.